A 64-amino-acid polypeptide reads, in one-letter code: Large ribosomal subunit protein bL35 (64 aa).

Residues 1–45 are compositionally biased toward basic residues; that stretch reads MPKMKTHKGAAKRFKKTGKGKIKRRKAFKSHILTKKTPKRKRNLR. A disordered region spans residues 1-64; that stretch reads MPKMKTHKGA…EEKRIKRLLP (64 aa).

The protein belongs to the bacterial ribosomal protein bL35 family.

The chain is Large ribosomal subunit protein bL35 from Natranaerobius thermophilus (strain ATCC BAA-1301 / DSM 18059 / JW/NM-WN-LF).